Consider the following 138-residue polypeptide: uncharacterized protein (138 aa).

An HTH merR-type domain is found at 3 to 72 (LYSISKAAEK…LEDINEFVKD (70 aa)). A DNA-binding region (H-T-H motif) is located at residues 6–25 (ISKAAEKTSISSYTLRYYEK).

This is an uncharacterized protein from Bacillus subtilis (strain 168).